Here is a 4134-residue protein sequence, read N- to C-terminus: DNA-dependent protein kinase catalytic subunit (4134 aa).

HEAT repeat units follow at residues 900-937, 1000-1036, and 1050-1085; these read VIYLDVFLPRVTDLALSASDRQTKIAACELLHSIVAYM, QDTVTFLEAILSGIVDPVDSTLRDFCGQCVREFLKWS, and ANTKSLFKRLYSLALHPSAFKRLGAALAFNSIYREF. TPR repeat units follow at residues 1265–1305 and 1722–1755; these read YNTF…HDIH and PMSSDEFPKGTLKHNNYVDCTKKFLDALELSQSP. The residue at position 2055 (Ser-2055) is a Phosphoserine; by autocatalysis. The stretch at 2207–2240 is one TPR 3 repeat; it reads DEILANRLLEFLMKNAFHQKRAVFRHNLEIIKTV. Phosphothreonine; by autocatalysis is present on Thr-2609. Residues 2611-2629 show a composition bias toward polar residues; that stretch reads ASQSTNRNSSQERSLSISG. The segment at 2611-2631 is disordered; it reads ASQSTNRNSSQERSLSISGSV. Ser-2612 carries the phosphoserine; by autocatalysis modification. A phosphothreonine; by autocatalysis mark is found at Thr-2638 and Thr-2647. One can recognise an FAT domain in the interval 2880 to 3545; that stretch reads NVSTSCLASL…IYPFTISSES (666 aa). A PI3K/PI4K catalytic domain is found at 3728 to 4059; the sequence is FDERIMVLES…VSYVKRKLTG (332 aa). Positions 3734 to 3740 are G-loop; that stretch reads VLESLRK. A catalytic loop region spans residues 3925–3933; sequence GIGDRHLSN. The activation loop stretch occupies residues 3945–3970; it reads GIDFGHAFGSATQFLPVPELMPFRLT. One can recognise an FATC domain in the interval 4102 to 4134; the sequence is DRLSEETQVRCLIDQATDPNLLGRVWEGWEPWM.

This sequence belongs to the PI3/PI4-kinase family. As to quaternary structure, DNA-PK is a heterotrimer of PRKDC and the Ku dimer (composed of XRCC6/Ku70 and XRCC5/Ku86). Component of the core long-range non-homologous end joining (NHEJ) complex (also named DNA-PK complex) composed of PRKDC, LIG4, XRCC4, XRCC6/Ku70, XRCC5/Ku86 and NHEJ1/XLF. Additional component of the NHEJ complex includes PAXX. Following autophosphorylation, PRKDC dissociates from DNA. Post-translationally, autophosphorylated at two clusters, the T2609 cluster and the S2056 cluster. Autophosphorylated on Ser-2055, Thr-2609, Thr-2638 and Thr-2647. Ser-2055 and Thr-2609 are DNA damage-inducible phosphorylation sites (inducible with ionizing radiation, IR) dephosphorylated by PPP5C. Autophosphorylation induces a conformational change that leads to remodeling of the DNA-PK complex, requisite for efficient end processing and DNA repair. Autophosphorylation in trans within DNA-PK complexes loaded on DNA ends leads to the dissociation of PRKDC from DNA and the transition into the short-range NHEJ complex. Autophosphorylation of the T2609 cluster is required for hematopoietic development and protein synthesis in erythrocytes precursors.

It is found in the nucleus. It localises to the nucleolus. It catalyses the reaction L-seryl-[protein] + ATP = O-phospho-L-seryl-[protein] + ADP + H(+). The enzyme catalyses L-threonyl-[protein] + ATP = O-phospho-L-threonyl-[protein] + ADP + H(+). Serine/threonine-protein kinase that acts as a molecular sensor for DNA damage. Involved in DNA nonhomologous end joining (NHEJ) required for double-strand break (DSB) repair and V(D)J recombination. Must be bound to DNA to express its catalytic properties. Promotes processing of hairpin DNA structures in V(D)J recombination by activation of the hairpin endonuclease artemis (DCLRE1C). Recruited by XRCC5 and XRCC6 to DNA ends and is required to (1) protect and align broken ends of DNA, thereby preventing their degradation, (2) and sequester the DSB for repair by NHEJ. Acts as a scaffold protein to aid the localization of DNA repair proteins to the site of damage. The assembly of the DNA-PK complex at DNA ends is also required for the NHEJ ligation step. Found at the ends of chromosomes, suggesting a further role in the maintenance of telomeric stability and the prevention of chromosomal end fusion. As part of the DNA-PK complex, involved in the early steps of ribosome assembly by promoting the processing of precursor rRNA into mature 18S rRNA in the small-subunit processome. Recognizes the substrate consensus sequence [ST]-Q. Phosphorylates 'Ser-139' of histone variant H2AX, thereby regulating DNA damage response mechanism. In Gallus gallus (Chicken), this protein is DNA-dependent protein kinase catalytic subunit (PRKDC).